Consider the following 221-residue polypeptide: Leucine rich adaptor protein 1-like (221 aa).

Methionine 1 is modified (N-acetylmethionine). The interval 1–81 (MEDGPLPDLR…SGSPRRSHPS (81 aa)) is disordered. Basic and acidic residues-rich tracts occupy residues 8–21 (DLRD…RKVP) and 28–39 (LRGEEPAPREGA). Residues 48 to 75 (SCSSSSSCSSFAPSVSSSSSSSPASGSP) show a composition bias toward low complexity.

This is Leucine rich adaptor protein 1-like (Lurap1l) from Rattus norvegicus (Rat).